Reading from the N-terminus, the 328-residue chain is GTPase Obg 2 (328 aa).

The region spanning 1 to 139 is the Obg domain; the sequence is MSFRREKFIE…HCVLLKLKIV (139 aa). The OBG-type G domain maps to 140 to 309; sequence SDVGIIGMPN…LHAQVKKAVV (170 aa). Residues 146-153, 171-175, 192-195, 259-262, and 290-292 each bind GTP; these read GMPNAGKS, FTTLE, DIPG, NKCD, and GDE. Residues Ser-153 and Thr-173 each coordinate Mg(2+).

Belongs to the TRAFAC class OBG-HflX-like GTPase superfamily. OBG GTPase family. Monomer. Mg(2+) is required as a cofactor.

The protein resides in the cytoplasm. Its function is as follows. An essential GTPase which binds GTP, GDP and possibly (p)ppGpp with moderate affinity, with high nucleotide exchange rates and a fairly low GTP hydrolysis rate. Plays a role in control of the cell cycle, stress response, ribosome biogenesis and in those bacteria that undergo differentiation, in morphogenesis control. The sequence is that of GTPase Obg 2 from Anaplasma marginale (strain St. Maries).